The chain runs to 320 residues: Protein MRH1 (320 aa).

Residues 1–34 (MSTFETLIKRGGNEAIKINPPTGADFHITSRGSD) lie on the Extracellular side of the membrane. A helical membrane pass occupies residues 35–55 (WFWTCFCCYLLFGLILTFLMF). At 56 to 62 (RKPVNDR) the chain is on the cytoplasmic side. Residues 63–83 (FFYLTGIAPNFFMCIAYFTMA) form a helical membrane-spanning segment. Residues 84 to 116 (SNLGWIPVKAKYNHVQTSTQKEHPGYRQIFYSR) lie on the Extracellular side of the membrane. A helical membrane pass occupies residues 117–137 (FVGWFLALPWPIIQICMLAGT). Topologically, residues 138–141 (PFWQ) are cytoplasmic. Residues 142-162 (MAFNVCITEFFTVCWLIAACV) traverse the membrane as a helical segment. At 163 to 167 (HSTYK) the chain is on the extracellular side. The chain crosses the membrane as a helical span at residues 168–188 (WGYYTIGLGAAIVVSISVMTT). The Cytoplasmic portion of the chain corresponds to 189–204 (SYNLVKQRDNDIRLTF). A helical membrane pass occupies residues 205-225 (LVFFSIIMFLWIIAYPTCFGI). Over 226–238 (TDGGNVLQPDSAG) the chain is Extracellular. Residues 239 to 259 (IFYGIIDLILMCFIPTLLVPI) form a helical membrane-spanning segment. The Cytoplasmic portion of the chain corresponds to 260 to 320 (ANHFGADKLG…KSKKSKKSEE (61 aa)). The interval 285 to 320 (APVASPRPAATPNLSKDKKKKSKKSKKSKKSKKSEE) is disordered. S289 carries the post-translational modification Phosphoserine. Phosphothreonine is present on T295. Position 299 is a phosphoserine (S299). Over residues 301 to 320 (DKKKKSKKSKKSKKSKKSEE) the composition is skewed to basic residues.

Belongs to the archaeal/bacterial/fungal opsin family.

The protein localises to the cell membrane. It is found in the mitochondrion. Its subcellular location is the bud. The protein is Protein MRH1 (MRH1) of Saccharomyces cerevisiae (strain ATCC 204508 / S288c) (Baker's yeast).